The primary structure comprises 852 residues: Probable LRR receptor-like serine/threonine-protein kinase At1g05700 (852 aa).

Residues 1 to 25 (MEEFRFLYLIYSAAFALCLVVSVLA) form the signal peptide. The Extracellular portion of the chain corresponds to 26-510 (QDQSGFISID…SCRKSNSKKL (485 aa)). N-linked (GlcNAc...) asparagine glycans are attached at residues Asn-138, Asn-182, Asn-231, Asn-240, Asn-258, Asn-293, Asn-400, Asn-415, and Asn-431. LRR repeat units lie at residues 410 to 432 (RITS…FSNL), 434 to 457 (MIQE…SKLK), and 458 to 479 (FLRV…ELLE). N-linked (GlcNAc...) asparagine glycosylation is present at Asn-466. Residues 511–531 (VIPLVASFAALFILLLLSGVF) traverse the membrane as a helical segment. Over 532-852 (WRIRNRRNKS…LQREESNKNY (321 aa)) the chain is Cytoplasmic. Thr-561 carries the phosphothreonine modification. The Protein kinase domain maps to 570-843 (NNFGQVLGKG…HIVRGLNECL (274 aa)). ATP is bound by residues 576–584 (LGKGGFGTV) and Lys-597. The residue at position 642 (Tyr-642) is a Phosphotyrosine. Asp-693 functions as the Proton acceptor in the catalytic mechanism. 2 positions are modified to phosphoserine: Ser-697 and Ser-727. Thr-728 and Thr-733 each carry phosphothreonine.

Belongs to the protein kinase superfamily. Ser/Thr protein kinase family.

It localises to the membrane. It catalyses the reaction L-seryl-[protein] + ATP = O-phospho-L-seryl-[protein] + ADP + H(+). The enzyme catalyses L-threonyl-[protein] + ATP = O-phospho-L-threonyl-[protein] + ADP + H(+). The protein is Probable LRR receptor-like serine/threonine-protein kinase At1g05700 of Arabidopsis thaliana (Mouse-ear cress).